A 423-amino-acid polypeptide reads, in one-letter code: MSRLAKRHPDLLSCNFNQDYSCIAVGHKKGYTILNCDPFGKVHSNNDQGATGIVEMLFCTSLVALVGAAENQPSNSPRKLQIVNTKRQSTICELIFPTSVLAVKMNRKRLIVVLENEIYIYDISTMKLLHTIETGPNPNAVCALSSSSERSYLAYPSPVPSASSTPLSSSAIPAPPPAPTTGDVLLFDTISLTALNVIQAHKTPIAALALNSTGTMLATASDKGTVVRVFSVPDAKKLWQFRRGSSSARIFSINFNLMSTLLAVSSDTSTIHIYRLASSRKGGKDADDASTEEARSPTPSETPLASSPPLAAGKLDSHSAASSLRRRSYHLGKSFVGGVGGYLPKSVSEMWEPQRDFAFIKLRGNHGRTVVAMSATVPQVMVISSEGLFQAYNIDLENGGECSLMKEFALLGSEDFGNGSNGI.

2 WD repeats span residues 200-240 and 245-284; these read AHKT…KLWQ and SSSA…KGGK. A L/FRRG motif motif is present at residues 241-245; it reads FRRGS. A disordered region spans residues 281–317; that stretch reads KGGKDADDASTEEARSPTPSETPLASSPPLAAGKLDS. A compositionally biased stretch (basic and acidic residues) spans 282–295; sequence GGKDADDASTEEAR.

Belongs to the WD repeat PROPPIN family. In terms of assembly, component of the PI(3,5)P2 regulatory complex.

Its subcellular location is the preautophagosomal structure membrane. The protein localises to the vacuole membrane. The protein resides in the endosome membrane. In terms of biological role, the PI(3,5)P2 regulatory complex regulates both the synthesis and turnover of phosphatidylinositol 3,5-bisphosphate (PtdIns(3,5)P2). Necessary for proper vacuole morphology. Plays an important role in osmotically-induced vacuole fragmentation. Required for cytoplasm to vacuole transport (Cvt) vesicle formation, pexophagy and starvation-induced autophagy. Involved in correct ATG9 trafficking to the pre-autophagosomal structure. Might also be involved in premeiotic DNA replication. The sequence is that of Autophagy-related protein 18 (ATG18) from Cryptococcus neoformans var. neoformans serotype D (strain JEC21 / ATCC MYA-565) (Filobasidiella neoformans).